The chain runs to 257 residues: Envelope glycoprotein (257 aa).

Over 1 to 229 (FPILPGVWVD…EWAIHLLKGL (229 aa)) the chain is Extracellular. 3 N-linked (GlcNAc...) asparagine; by host glycosylation sites follow: Asn15, Asn58, and Asn68. The interval 95–115 (GPTARIFASILAPGVAAAQAL) is fusion peptide. Residues 112–162 (AQALREIERLACWSVKQANLTTSLLGDLLDDVTSIRHAVLQNRAAIDFLLL) adopt a coiled-coil conformation. The N-linked (GlcNAc...) asparagine; by host glycan is linked to Asn130. The interval 151-167 (LQNRAAIDFLLLAHGHG) is immunosuppression. N-linked (GlcNAc...) asparagine; by host glycosylation occurs at Asn178. Residues 180–210 (SDHSEAIQKKFQLMKEHVNKIGVDSDPIGSW) adopt a coiled-coil conformation. A helical membrane pass occupies residues 230 to 250 (LLGLVVILLLVVCLPCLLQFV). The S-palmitoyl cysteine; by host moiety is linked to residue Cys245. The Cytoplasmic portion of the chain corresponds to 251-257 (SSSTRKM).

The mature envelope protein (Env) consists of a trimer of SU-TM heterodimers attached by noncovalent interactions or by a labile interchain disulfide bond. Specific enzymatic cleavages in vivo yield mature proteins. Envelope glycoproteins are synthesized as an inactive precursor that is N-glycosylated and processed likely by host cell furin or by a furin-like protease in the Golgi to yield the mature SU and TM proteins. The cleavage site between SU and TM requires the minimal sequence [KR]-X-[KR]-R. In terms of processing, the transmembrane protein is palmitoylated.

It is found in the virion membrane. The protein localises to the host cell membrane. The surface protein (SU) attaches the virus to the host cell by binding to its receptor. This interaction triggers the refolding of the transmembrane protein (TM) and is thought to activate its fusogenic potential by unmasking its fusion peptide. Fusion occurs at the host cell plasma membrane. In terms of biological role, the transmembrane protein (TM) acts as a class I viral fusion protein. Under the current model, the protein has at least 3 conformational states: pre-fusion native state, pre-hairpin intermediate state, and post-fusion hairpin state. During viral and target cell membrane fusion, the coiled coil regions (heptad repeats) assume a trimer-of-hairpins structure, positioning the fusion peptide in close proximity to the C-terminal region of the ectodomain. The formation of this structure appears to drive apposition and subsequent fusion of viral and target cell membranes. Membranes fusion leads to delivery of the nucleocapsid into the cytoplasm. This is Envelope glycoprotein (env) from Galliformes.